The following is a 337-amino-acid chain: Mitochondrial glutathione transporter SLC25A40 (337 aa).

Solcar repeat units follow at residues 14-132 (VTPL…LSTF), 140-224 (NETR…LRRW), and 234-328 (STFM…GKGF). The next 6 helical transmembrane spans lie at 20–40 (MMAS…LDVV), 104–124 (LWSG…IYFT), 146–166 (IVAG…LELI), 200–221 (WAPT…YENL), 240–260 (FTAG…FDVV), and 299–319 (GLFT…AIMI).

This sequence belongs to the mitochondrial carrier (TC 2.A.29) family. As to expression, widely expressed at low level.

The protein resides in the mitochondrion inner membrane. It carries out the reaction glutathione(in) = glutathione(out). Functionally, probable mitochondrial transporter required for glutathione import into mitochondria. Glutathione, which plays key roles in oxidative metabolism, is produced exclusively in the cytosol and is imported in many organelles. Mitochondrial glutathione is required for the activity and stability of proteins containing iron-sulfur clusters, as well as erythropoiesis. This Rattus norvegicus (Rat) protein is Mitochondrial glutathione transporter SLC25A40.